Here is a 255-residue protein sequence, read N- to C-terminus: 4-hydroxy-tetrahydrodipicolinate reductase (255 aa).

NAD(+) contacts are provided by residues 9–14 (GFKGRM), 89–91 (GTT), and 115–118 (APNF). His-145 functions as the Proton donor/acceptor in the catalytic mechanism. His-146 lines the (S)-2,3,4,5-tetrahydrodipicolinate pocket. The Proton donor role is filled by Lys-149. 155-156 (GT) lines the (S)-2,3,4,5-tetrahydrodipicolinate pocket.

This sequence belongs to the DapB family.

It is found in the cytoplasm. It catalyses the reaction (S)-2,3,4,5-tetrahydrodipicolinate + NAD(+) + H2O = (2S,4S)-4-hydroxy-2,3,4,5-tetrahydrodipicolinate + NADH + H(+). The enzyme catalyses (S)-2,3,4,5-tetrahydrodipicolinate + NADP(+) + H2O = (2S,4S)-4-hydroxy-2,3,4,5-tetrahydrodipicolinate + NADPH + H(+). The protein operates within amino-acid biosynthesis; L-lysine biosynthesis via DAP pathway; (S)-tetrahydrodipicolinate from L-aspartate: step 4/4. Catalyzes the conversion of 4-hydroxy-tetrahydrodipicolinate (HTPA) to tetrahydrodipicolinate. The chain is 4-hydroxy-tetrahydrodipicolinate reductase from Streptococcus mutans serotype c (strain ATCC 700610 / UA159).